We begin with the raw amino-acid sequence, 503 residues long: GMP synthase [glutamine-hydrolyzing] (503 aa).

Residues Pro3 to Asn189 form the Glutamine amidotransferase type-1 domain. The active-site Nucleophile is Cys80. Catalysis depends on residues His165 and Glu167. The GMPS ATP-PPase domain maps to Trp190 to Arg380. Position 217–223 (Ser217–Val223) interacts with ATP.

Homodimer.

It carries out the reaction XMP + L-glutamine + ATP + H2O = GMP + L-glutamate + AMP + diphosphate + 2 H(+). The protein operates within purine metabolism; GMP biosynthesis; GMP from XMP (L-Gln route): step 1/1. Catalyzes the synthesis of GMP from XMP. This chain is GMP synthase [glutamine-hydrolyzing], found in Tropheryma whipplei (strain Twist) (Whipple's bacillus).